The sequence spans 89 residues: Cell division topological specificity factor (89 aa).

It belongs to the MinE family.

Functionally, prevents the cell division inhibition by proteins MinC and MinD at internal division sites while permitting inhibition at polar sites. This ensures cell division at the proper site by restricting the formation of a division septum at the midpoint of the long axis of the cell. The sequence is that of Cell division topological specificity factor from Heliobacterium modesticaldum (strain ATCC 51547 / Ice1).